The sequence spans 324 residues: Polyketide biosynthesis acyltransferase homolog BaeD (324 aa).

Serine 99 is a catalytic residue.

Its subcellular location is the cytoplasm. It participates in antibiotic biosynthesis; bacillaene biosynthesis. In terms of biological role, probably involved in some intermediate steps for the synthesis of the antibiotic polyketide bacillaene which is involved in secondary metabolism. This is Polyketide biosynthesis acyltransferase homolog BaeD (baeD) from Bacillus velezensis (strain DSM 23117 / BGSC 10A6 / LMG 26770 / FZB42) (Bacillus amyloliquefaciens subsp. plantarum).